Here is a 237-residue protein sequence, read N- to C-terminus: UPF0053 protein HI_0056 (237 aa).

The next 7 membrane-spanning stretches (helical) occupy residues 12 to 32 (ISLV…IIFI), 49 to 69 (ILGL…LAWI), 90 to 110 (ILLI…KEAI), 126 to 146 (YLGV…DSVI), 151 to 171 (MASH…VMMF), 188 to 208 (ILAL…SLDI), and 210 to 230 (IPKG…MINI).

Belongs to the UPF0053 family.

It localises to the cell membrane. In Haemophilus influenzae (strain ATCC 51907 / DSM 11121 / KW20 / Rd), this protein is UPF0053 protein HI_0056.